A 497-amino-acid polypeptide reads, in one-letter code: Lysine--tRNA ligase (497 aa).

Mg(2+) is bound by residues Glu409 and Glu416.

It belongs to the class-II aminoacyl-tRNA synthetase family. In terms of assembly, homodimer. Mg(2+) serves as cofactor.

Its subcellular location is the cytoplasm. The catalysed reaction is tRNA(Lys) + L-lysine + ATP = L-lysyl-tRNA(Lys) + AMP + diphosphate. The chain is Lysine--tRNA ligase from Streptococcus pyogenes serotype M3 (strain ATCC BAA-595 / MGAS315).